We begin with the raw amino-acid sequence, 1318 residues long: DNA-directed RNA polymerase subunit beta' (1318 aa).

Zn(2+) is bound by residues cysteine 60, cysteine 62, cysteine 75, and cysteine 78. Mg(2+)-binding residues include aspartate 535, aspartate 537, and aspartate 539. The Zn(2+) site is built by cysteine 890, cysteine 967, cysteine 974, and cysteine 977.

The protein belongs to the RNA polymerase beta' chain family. As to quaternary structure, the RNAP catalytic core consists of 2 alpha, 1 beta, 1 beta' and 1 omega subunit. When a sigma factor is associated with the core the holoenzyme is formed, which can initiate transcription. It depends on Mg(2+) as a cofactor. The cofactor is Zn(2+).

The enzyme catalyses RNA(n) + a ribonucleoside 5'-triphosphate = RNA(n+1) + diphosphate. DNA-dependent RNA polymerase catalyzes the transcription of DNA into RNA using the four ribonucleoside triphosphates as substrates. This Rhodococcus erythropolis (strain PR4 / NBRC 100887) protein is DNA-directed RNA polymerase subunit beta'.